We begin with the raw amino-acid sequence, 326 residues long: Beta-ketoacyl-[acyl-carrier-protein] synthase III (326 aa).

Active-site residues include C111 and H253. Residues 254-258 form an ACP-binding region; the sequence is QANSR. N283 is an active-site residue.

It belongs to the thiolase-like superfamily. FabH family. In terms of assembly, homodimer.

Its subcellular location is the cytoplasm. It carries out the reaction malonyl-[ACP] + acetyl-CoA + H(+) = 3-oxobutanoyl-[ACP] + CO2 + CoA. It participates in lipid metabolism; fatty acid biosynthesis. Functionally, catalyzes the condensation reaction of fatty acid synthesis by the addition to an acyl acceptor of two carbons from malonyl-ACP. Catalyzes the first condensation reaction which initiates fatty acid synthesis and may therefore play a role in governing the total rate of fatty acid production. Possesses both acetoacetyl-ACP synthase and acetyl transacylase activities. Its substrate specificity determines the biosynthesis of branched-chain and/or straight-chain of fatty acids. The protein is Beta-ketoacyl-[acyl-carrier-protein] synthase III of Latilactobacillus sakei subsp. sakei (strain 23K) (Lactobacillus sakei subsp. sakei).